The chain runs to 280 residues: Threonylcarbamoyl-AMP synthase (280 aa).

A mitochondrion-targeting transit peptide spans 1 to 56; that stretch reads MSTARPCAGLRAAVAAGMGLSDGPAGSSRGCRLLRPPAPAPALPGARLLRLPESEA. A Phosphoserine modification is found at S61. In terms of domain architecture, YrdC-like spans 68 to 258; that stretch reads TEALRAAVAE…KFGIIRSGCA (191 aa).

Belongs to the SUA5 family. In terms of assembly, interacts with RSC1A1.

It localises to the cytoplasm. It is found in the mitochondrion. The protein resides in the cell membrane. The catalysed reaction is L-threonine + hydrogencarbonate + ATP = L-threonylcarbamoyladenylate + diphosphate + H2O. Cytoplasmic and mitochondrial threonylcarbamoyl-AMP synthase required for the formation of a threonylcarbamoyl group on adenosine at position 37 (t(6)A37) in tRNAs that read codons beginning with adenine. Catalyzes the conversion of L-threonine, HCO(3)(-)/CO(2) and ATP to give threonylcarbamoyl-AMP (TC-AMP) as the acyladenylate intermediate, with the release of diphosphate. Participates in t(6)A37 formation in cytoplasmic and mitochondrial tRNAs. May regulate the activity of some transporters. This Rattus norvegicus (Rat) protein is Threonylcarbamoyl-AMP synthase.